Reading from the N-terminus, the 855-residue chain is Protein translocase subunit SecA (855 aa).

ATP is bound by residues Q88, 106–110 (GEGKT), and D509. The interval 815-837 (EANLQNKFEKKPARNEPCPCGSG) is disordered. 4 residues coordinate Zn(2+): C832, C834, C843, and C844.

The protein belongs to the SecA family. Monomer and homodimer. Part of the essential Sec protein translocation apparatus which comprises SecA, SecYEG and auxiliary proteins SecDF-YajC and YidC. It depends on Zn(2+) as a cofactor.

It localises to the cell inner membrane. The protein resides in the cytoplasm. The catalysed reaction is ATP + H2O + cellular proteinSide 1 = ADP + phosphate + cellular proteinSide 2.. In terms of biological role, part of the Sec protein translocase complex. Interacts with the SecYEG preprotein conducting channel. Has a central role in coupling the hydrolysis of ATP to the transfer of proteins into and across the cell membrane, serving as an ATP-driven molecular motor driving the stepwise translocation of polypeptide chains across the membrane. The sequence is that of Protein translocase subunit SecA from Campylobacter fetus subsp. fetus (strain 82-40).